Here is a 271-residue protein sequence, read N- to C-terminus: Phosphonoacetaldehyde hydrolase (271 aa).

D12 serves as the catalytic Nucleophile. The Mg(2+) site is built by D12 and A14. K54 acts as the Schiff-base intermediate with substrate in catalysis. D188 contacts Mg(2+).

The protein belongs to the HAD-like hydrolase superfamily. PhnX family. As to quaternary structure, homodimer. It depends on Mg(2+) as a cofactor.

The enzyme catalyses phosphonoacetaldehyde + H2O = acetaldehyde + phosphate + H(+). Its function is as follows. Involved in phosphonate degradation. This is Phosphonoacetaldehyde hydrolase from Vibrio campbellii (strain ATCC BAA-1116).